Reading from the N-terminus, the 123-residue chain is WAP four-disulfide core domain protein 5 (123 aa).

Residues 1–24 (MRFWSLFLLVVLLAVGGQLPAASG) form the signal peptide. WAP domains lie at 27-74 (KGER…VPRI) and 75-121 (LVKR…RDPA). 8 disulfides stabilise this stretch: Cys34-Cys62, Cys41-Cys66, Cys49-Cys61, Cys55-Cys70, Cys81-Cys109, Cys88-Cys113, Cys96-Cys108, and Cys102-Cys117.

It is found in the secreted. Putative acid-stable proteinase inhibitor. The protein is WAP four-disulfide core domain protein 5 (WFDC5) of Lemur catta (Ring-tailed lemur).